The following is a 273-amino-acid chain: Putative phosphoenolpyruvate synthase regulatory protein (273 aa).

ADP is bound at residue 153–160; sequence GVSRSGKT.

The protein belongs to the pyruvate, phosphate/water dikinase regulatory protein family. PSRP subfamily.

It catalyses the reaction [pyruvate, water dikinase] + ADP = [pyruvate, water dikinase]-phosphate + AMP + H(+). The enzyme catalyses [pyruvate, water dikinase]-phosphate + phosphate + H(+) = [pyruvate, water dikinase] + diphosphate. Bifunctional serine/threonine kinase and phosphorylase involved in the regulation of the phosphoenolpyruvate synthase (PEPS) by catalyzing its phosphorylation/dephosphorylation. In Albidiferax ferrireducens (strain ATCC BAA-621 / DSM 15236 / T118) (Rhodoferax ferrireducens), this protein is Putative phosphoenolpyruvate synthase regulatory protein.